The sequence spans 366 residues: Mitogen-activated protein kinase p38a (366 aa).

The Protein kinase domain maps to 25–312 (YQDLQPVGSG…AEEALSHPYL (288 aa)). ATP is bound by residues 31–39 (VGSGAYGQV) and K54. D154 (proton acceptor) is an active-site residue. At T184 the chain carries Phosphothreonine. Residues 184–186 (TGY) carry the TXY motif. Y186 carries the phosphotyrosine modification.

The protein belongs to the protein kinase superfamily. CMGC Ser/Thr protein kinase family. MAP kinase subfamily. Mg(2+) serves as cofactor. Dually phosphorylated on Thr-184 and Tyr-186, which activates the enzyme.

Its subcellular location is the nucleus. The enzyme catalyses L-seryl-[protein] + ATP = O-phospho-L-seryl-[protein] + ADP + H(+). The catalysed reaction is L-threonyl-[protein] + ATP = O-phospho-L-threonyl-[protein] + ADP + H(+). Its activity is regulated as follows. Activated by threonine and tyrosine phosphorylation by Mkk3 in response to environmental stress. Kinase involved in a signal transduction pathway. May down-regulate insect immunity gene expression after prolonged infection. The protein is Mitogen-activated protein kinase p38a of Drosophila melanogaster (Fruit fly).